A 301-amino-acid polypeptide reads, in one-letter code: Large ribosomal subunit protein uL18 (301 aa).

It belongs to the universal ribosomal protein uL18 family. In terms of assembly, component of the large ribosomal subunit (LSU). Mature N.crassa ribosomes consist of a small (40S) and a large (60S) subunit. The 40S small subunit contains 1 molecule of ribosomal RNA (18S rRNA) and at least 32 different proteins. The large 60S subunit contains 3 rRNA molecules (26S, 5.8S and 5S rRNA) and at least 42 different proteins.

The protein resides in the cytoplasm. Its function is as follows. Component of the ribosome, a large ribonucleoprotein complex responsible for the synthesis of proteins in the cell. The small ribosomal subunit (SSU) binds messenger RNAs (mRNAs) and translates the encoded message by selecting cognate aminoacyl-transfer RNA (tRNA) molecules. The large subunit (LSU) contains the ribosomal catalytic site termed the peptidyl transferase center (PTC), which catalyzes the formation of peptide bonds, thereby polymerizing the amino acids delivered by tRNAs into a polypeptide chain. The nascent polypeptides leave the ribosome through a tunnel in the LSU and interact with protein factors that function in enzymatic processing, targeting, and the membrane insertion of nascent chains at the exit of the ribosomal tunnel. The polypeptide is Large ribosomal subunit protein uL18 (rpl-5) (Neurospora crassa (strain ATCC 24698 / 74-OR23-1A / CBS 708.71 / DSM 1257 / FGSC 987)).